The chain runs to 369 residues: D-glucosaminate-6-phosphate ammonia lyase (369 aa).

The residue at position 213 (lysine 213) is an N6-(pyridoxal phosphate)lysine.

This sequence belongs to the SelA family. Pyridoxal 5'-phosphate is required as a cofactor.

It carries out the reaction 2-amino-2-deoxy-D-gluconate 6-phosphate = 2-dehydro-3-deoxy-6-phospho-D-gluconate + NH4(+). Involved in the catabolism of D-glucosaminate. Catalyzes the conversion of D-glucosaminate 6-phosphate to yield keto-3-deoxygluconate 6-phosphate (KDGP). The protein is D-glucosaminate-6-phosphate ammonia lyase of Salmonella typhimurium (strain 14028s / SGSC 2262).